Consider the following 320-residue polypeptide: Lipoyl synthase (320 aa).

Residues cysteine 67, cysteine 72, cysteine 78, cysteine 93, cysteine 97, cysteine 100, and serine 307 each contribute to the [4Fe-4S] cluster site. Residues 79–296 (FNHGTATFMI…REKANEMGFE (218 aa)) enclose the Radical SAM core domain.

It belongs to the radical SAM superfamily. Lipoyl synthase family. Requires [4Fe-4S] cluster as cofactor.

It is found in the cytoplasm. The catalysed reaction is [[Fe-S] cluster scaffold protein carrying a second [4Fe-4S](2+) cluster] + N(6)-octanoyl-L-lysyl-[protein] + 2 oxidized [2Fe-2S]-[ferredoxin] + 2 S-adenosyl-L-methionine + 4 H(+) = [[Fe-S] cluster scaffold protein] + N(6)-[(R)-dihydrolipoyl]-L-lysyl-[protein] + 4 Fe(3+) + 2 hydrogen sulfide + 2 5'-deoxyadenosine + 2 L-methionine + 2 reduced [2Fe-2S]-[ferredoxin]. It participates in protein modification; protein lipoylation via endogenous pathway; protein N(6)-(lipoyl)lysine from octanoyl-[acyl-carrier-protein]: step 2/2. Its function is as follows. Catalyzes the radical-mediated insertion of two sulfur atoms into the C-6 and C-8 positions of the octanoyl moiety bound to the lipoyl domains of lipoate-dependent enzymes, thereby converting the octanoylated domains into lipoylated derivatives. The protein is Lipoyl synthase of Glaesserella parasuis serovar 5 (strain SH0165) (Haemophilus parasuis).